A 439-amino-acid chain; its full sequence is Enolase (439 aa).

Residues H160 and E169 each contribute to the substrate site. The active-site Proton donor is the E212. Mg(2+)-binding residues include D247, E296, and D323. Positions 296 and 323 each coordinate substrate. The Proton acceptor role is filled by K348. Residues 375–378 (SHRS) and K399 each bind substrate.

This sequence belongs to the enolase family. Homodimer. It depends on Mg(2+) as a cofactor.

Its subcellular location is the cytoplasm. The catalysed reaction is (2R)-2-phosphoglycerate = phosphoenolpyruvate + H2O. The protein operates within carbohydrate degradation; glycolysis; pyruvate from D-glyceraldehyde 3-phosphate: step 4/5. This Rhodotorula mucilaginosa (Yeast) protein is Enolase (ENO).